Consider the following 1073-residue polypeptide: Transmembrane protein 132E (1073 aa).

Residues 1–33 form the signal peptide; sequence MGHFVVQGDLPWILCSLRLVIMIIAGKVSPTSS. Over 34–899 the chain is Extracellular; that stretch reads DALFSVPVPS…MTDLEIGMYA (866 aa). Asn-102 is a glycosylation site (N-linked (GlcNAc...) asparagine). Residues 246–270 form a disordered region; that stretch reads DPDSNDECGESYPRRGGPSRGESLS. Asn-324, Asn-396, and Asn-746 each carry an N-linked (GlcNAc...) asparagine glycan. A helical transmembrane segment spans residues 900 to 920; sequence LLGVFCLAILVFLINCIVFVL. Residues 921-1073 are Cytoplasmic-facing; the sequence is KYRHKRIPPE…DYMRRIKEIA (153 aa). Positions 952–970 are enriched in polar residues; sequence TQSDLSPQTVESPSNTLEG. Residues 952 to 1024 form a disordered region; it reads TQSDLSPQTV…PTSKRKRVKF (73 aa). Low complexity predominate over residues 982–994; it reads SGSSQTSVQSQVH.

The protein belongs to the TMEM132 family.

It is found in the membrane. Functionally, required for normal inner ear hair cell function and hearing. The sequence is that of Transmembrane protein 132E (tmem132e) from Danio rerio (Zebrafish).